The chain runs to 286 residues: Probable protein S-acyltransferase 16 (286 aa).

2 helical membrane-spanning segments follow: residues 11–31 (PVTV…FTFI) and 45–65 (NAAA…IAVF). The DHHC domain maps to 97–147 (RYCQKCSHFKPPRAHHCRVCKRCVLRMDHHCIWINNCVGHTNYKVFFVFVV). The S-palmitoyl cysteine intermediate role is filled by cysteine 127. 2 helical membrane-spanning segments follow: residues 141–161 (VFFV…VLLV) and 182–202 (IYVI…VLLG).

This sequence belongs to the DHHC palmitoyltransferase family.

The protein resides in the golgi apparatus membrane. It catalyses the reaction L-cysteinyl-[protein] + hexadecanoyl-CoA = S-hexadecanoyl-L-cysteinyl-[protein] + CoA. In terms of biological role, palmitoyl acyltransferase. This Arabidopsis thaliana (Mouse-ear cress) protein is Probable protein S-acyltransferase 16 (PAT16).